Consider the following 100-residue polypeptide: Urease subunit gamma (100 aa).

It belongs to the urease gamma subunit family. Heterotrimer of UreA (gamma), UreB (beta) and UreC (alpha) subunits. Three heterotrimers associate to form the active enzyme.

It is found in the cytoplasm. The catalysed reaction is urea + 2 H2O + H(+) = hydrogencarbonate + 2 NH4(+). It functions in the pathway nitrogen metabolism; urea degradation; CO(2) and NH(3) from urea (urease route): step 1/1. The chain is Urease subunit gamma from Prochlorococcus marinus subsp. pastoris (strain CCMP1986 / NIES-2087 / MED4).